The chain runs to 262 residues: tRNA pseudouridine synthase A (262 aa).

Catalysis depends on Asp-55, which acts as the Nucleophile. Position 116 (Tyr-116) interacts with substrate.

It belongs to the tRNA pseudouridine synthase TruA family. In terms of assembly, homodimer.

It catalyses the reaction uridine(38/39/40) in tRNA = pseudouridine(38/39/40) in tRNA. In terms of biological role, formation of pseudouridine at positions 38, 39 and 40 in the anticodon stem and loop of transfer RNAs. This chain is tRNA pseudouridine synthase A, found in Bdellovibrio bacteriovorus (strain ATCC 15356 / DSM 50701 / NCIMB 9529 / HD100).